Here is a 280-residue protein sequence, read N- to C-terminus: Transmembrane protein 45B (280 aa).

A run of 7 helical transmembrane segments spans residues 7-27 (HALPGSFFLVFGLWWSVKYPL), 49-69 (LIEGILKAAFALIGILAEQFV), 96-116 (MYLFYGISGVVDILTFLPLNL), 120-140 (LDRLSLGIAVIIEGLLFYYHV), 150-170 (IHSLLLIAVFGGAISIMIEVF), 184-204 (LTILQGTWFWQIGFVLYPLGG), and 216-236 (VMFITMCFCWHYAVALLIMAI).

It belongs to the TMEM45 family.

It localises to the membrane. The polypeptide is Transmembrane protein 45B (tmem45b) (Xenopus tropicalis (Western clawed frog)).